A 599-amino-acid chain; its full sequence is Elongation factor 4 (599 aa).

Residues 5 to 187 enclose the tr-type G domain; the sequence is SHIRNFSIIA…RLVTTIPAPT (183 aa). Residues 17–22 and 134–137 each bind GTP; these read DHGKST and NKID.

It belongs to the TRAFAC class translation factor GTPase superfamily. Classic translation factor GTPase family. LepA subfamily.

The protein resides in the cell inner membrane. It catalyses the reaction GTP + H2O = GDP + phosphate + H(+). Its function is as follows. Required for accurate and efficient protein synthesis under certain stress conditions. May act as a fidelity factor of the translation reaction, by catalyzing a one-codon backward translocation of tRNAs on improperly translocated ribosomes. Back-translocation proceeds from a post-translocation (POST) complex to a pre-translocation (PRE) complex, thus giving elongation factor G a second chance to translocate the tRNAs correctly. Binds to ribosomes in a GTP-dependent manner. The protein is Elongation factor 4 of Pseudomonas fluorescens (strain ATCC BAA-477 / NRRL B-23932 / Pf-5).